The following is a 211-amino-acid chain: Large ribosomal subunit protein uL3 (211 aa).

The disordered stretch occupies residues Thr135 to Gly155. Residue Gln152 is modified to N5-methylglutamine.

Belongs to the universal ribosomal protein uL3 family. Part of the 50S ribosomal subunit. Forms a cluster with proteins L14 and L19. In terms of processing, methylated by PrmB.

One of the primary rRNA binding proteins, it binds directly near the 3'-end of the 23S rRNA, where it nucleates assembly of the 50S subunit. The sequence is that of Large ribosomal subunit protein uL3 from Pseudoalteromonas translucida (strain TAC 125).